Here is a 227-residue protein sequence, read N- to C-terminus: Cytochrome c oxidase subunit 2 (227 aa).

The Mitochondrial intermembrane portion of the chain corresponds to 1-14 (MAYPFQLGLQDATS). Residues 15-45 (PIMEELLHFHDHTLMIVFLISSLVLYIISLM) form a helical membrane-spanning segment. At 46–59 (LTTKLTHTSTMDAQ) the chain is on the mitochondrial matrix side. Residues 60–87 (EVETVWTILPAIILILIALPSLRILYMM) traverse the membrane as a helical segment. Over 88 to 227 (DEINNPSLTV…YFETWSALMV (140 aa)) the chain is Mitochondrial intermembrane. H161, C196, E198, C200, H204, and M207 together coordinate Cu cation. E198 is a binding site for Mg(2+). Y218 bears the Phosphotyrosine mark.

The protein belongs to the cytochrome c oxidase subunit 2 family. As to quaternary structure, component of the cytochrome c oxidase (complex IV, CIV), a multisubunit enzyme composed of 14 subunits. The complex is composed of a catalytic core of 3 subunits MT-CO1, MT-CO2 and MT-CO3, encoded in the mitochondrial DNA, and 11 supernumerary subunits COX4I, COX5A, COX5B, COX6A, COX6B, COX6C, COX7A, COX7B, COX7C, COX8 and NDUFA4, which are encoded in the nuclear genome. The complex exists as a monomer or a dimer and forms supercomplexes (SCs) in the inner mitochondrial membrane with NADH-ubiquinone oxidoreductase (complex I, CI) and ubiquinol-cytochrome c oxidoreductase (cytochrome b-c1 complex, complex III, CIII), resulting in different assemblies (supercomplex SCI(1)III(2)IV(1) and megacomplex MCI(2)III(2)IV(2)). Found in a complex with TMEM177, COA6, COX18, COX20, SCO1 and SCO2. Interacts with TMEM177 in a COX20-dependent manner. Interacts with COX20. Interacts with COX16. The cofactor is Cu cation.

It is found in the mitochondrion inner membrane. The enzyme catalyses 4 Fe(II)-[cytochrome c] + O2 + 8 H(+)(in) = 4 Fe(III)-[cytochrome c] + 2 H2O + 4 H(+)(out). Component of the cytochrome c oxidase, the last enzyme in the mitochondrial electron transport chain which drives oxidative phosphorylation. The respiratory chain contains 3 multisubunit complexes succinate dehydrogenase (complex II, CII), ubiquinol-cytochrome c oxidoreductase (cytochrome b-c1 complex, complex III, CIII) and cytochrome c oxidase (complex IV, CIV), that cooperate to transfer electrons derived from NADH and succinate to molecular oxygen, creating an electrochemical gradient over the inner membrane that drives transmembrane transport and the ATP synthase. Cytochrome c oxidase is the component of the respiratory chain that catalyzes the reduction of oxygen to water. Electrons originating from reduced cytochrome c in the intermembrane space (IMS) are transferred via the dinuclear copper A center (CU(A)) of subunit 2 and heme A of subunit 1 to the active site in subunit 1, a binuclear center (BNC) formed by heme A3 and copper B (CU(B)). The BNC reduces molecular oxygen to 2 water molecules using 4 electrons from cytochrome c in the IMS and 4 protons from the mitochondrial matrix. The sequence is that of Cytochrome c oxidase subunit 2 (MT-CO2) from Canis adustus (Side-striped jackal).